The primary structure comprises 79 residues: D-alanyl carrier protein (79 aa).

The Carrier domain occupies 1 to 77 (MDVKETILNI…KIISGVVELM (77 aa)). The residue at position 35 (Ser-35) is an O-(pantetheine 4'-phosphoryl)serine.

The protein belongs to the DltC family. In terms of processing, 4'-phosphopantetheine is transferred from CoA to a specific serine of apo-DCP.

It localises to the cytoplasm. Its pathway is cell wall biogenesis; lipoteichoic acid biosynthesis. Carrier protein involved in the D-alanylation of lipoteichoic acid (LTA). The loading of thioester-linked D-alanine onto DltC is catalyzed by D-alanine--D-alanyl carrier protein ligase DltA. The DltC-carried D-alanyl group is further transferred to cell membrane phosphatidylglycerol (PG) by forming an ester bond, probably catalyzed by DltD. D-alanylation of LTA plays an important role in modulating the properties of the cell wall in Gram-positive bacteria, influencing the net charge of the cell wall. The chain is D-alanyl carrier protein from Streptococcus suis (strain 05ZYH33).